Reading from the N-terminus, the 257-residue chain is Gasdermin-like protein rcd-1-1 (257 aa).

Belongs to the gasdermin family. In terms of assembly, heterooligomer; the heterooligomer with rcd-1-2 forms a ring-shaped pore complex when inserted in the membrane.

Its subcellular location is the cytoplasm. The protein resides in the cell membrane. Functionally, gasdermin-like protein involved in heterokaryon incompatibility, a process that ensures that during spontaneous vegetative cell fusion, only compatible cells from the same colony survive (non-self-recognition). In N.crassa, the rcd-1 locus exists as 2 incompatible alleles, rcd-1-1 (this entry) and rcd-1-2 (AC P0DW10). During the allorecognition process, forms a heterooligomer with rcd-1-2, thereby forming a functional gasdermin-like complex that binds to membranes and forms pores, triggering cell death. Binds negatively charged phospholipids, such as cardiolipin and phosphatidylserine. Also binds to phosphoinositides, preferentially to phosphatidylinositol-3-phosphate (PtdIns-3-P), PtdIns-5-P and PtdIns-3,5-P2. This chain is Gasdermin-like protein rcd-1-1, found in Neurospora crassa (strain ATCC 24698 / 74-OR23-1A / CBS 708.71 / DSM 1257 / FGSC 987).